Consider the following 682-residue polypeptide: Heat shock 70 kDa protein 9, mitochondrial (682 aa).

Residues 1–46 constitute a mitochondrion transit peptide; that stretch reads MASVALLRSFRRREVQMASVSAFKSVSANGKNSMFGKLGYLARPFC. Residues 640-682 form a disordered region; it reads SKIGEHMSKGSGSSGSDGSSGEGTSGTEQTPEAEFEEASGSRK. The segment covering 651–663 has biased composition (gly residues); sequence GSSGSDGSSGEGT.

The protein belongs to the heat shock protein 70 (TC 1.A.33) family. DnaK subfamily. In terms of assembly, interacts with HSCB.

It localises to the mitochondrion. The protein localises to the cytoplasm. Its subcellular location is the cytosol. Its function is as follows. Chaperone involved in the maturation of iron-sulfur [Fe-S] cluster-containing proteins. Has a low intrinsic ATPase activity which is markedly stimulated by HSCB and ISU1. In cooperation with other chaperones, Hsp70s are key components that facilitate folding of de novo synthesized proteins, assist translocation of precursor proteins into organelles, and are responsible for degradation of damaged protein under stress conditions. The protein is Heat shock 70 kDa protein 9, mitochondrial of Arabidopsis thaliana (Mouse-ear cress).